The chain runs to 118 residues: Large ribosomal subunit protein uL24 (118 aa).

It belongs to the universal ribosomal protein uL24 family. As to quaternary structure, part of the 50S ribosomal subunit.

Functionally, one of two assembly initiator proteins, it binds directly to the 5'-end of the 23S rRNA, where it nucleates assembly of the 50S subunit. In terms of biological role, one of the proteins that surrounds the polypeptide exit tunnel on the outside of the subunit. This is Large ribosomal subunit protein uL24 from Prochlorococcus marinus (strain MIT 9515).